A 318-amino-acid polypeptide reads, in one-letter code: Olfactory receptor 13C7 (318 aa).

The Extracellular segment spans residues 1–27 (MVSANQTASVTEFILLGLSAHPKLEKT). A helical transmembrane segment spans residues 28-48 (FFVLILLMYLVILLGNGVLIL). Residues 49-61 (MTVSNSHLHMPMY) lie on the Cytoplasmic side of the membrane. Residues 62-82 (FFLGNLSFLDICYTTSSVPLI) traverse the membrane as a helical segment. At 83–100 (LDSFLTPRKTISFSACAV) the chain is on the extracellular side. A helical membrane pass occupies residues 101-121 (QMFLSFAMGATECVLLSMMAF). Residues 122–181 (DRYVAICNPLRYPVVMSKAAYMPKAAGSWVAGSTASMVQTSLAMRLPFCGDNIINHFTCE) are Cytoplasmic-facing. Residues 182–202 (ILAVLKLACADISVNVISMGV) form a helical membrane-spanning segment. At 203 to 205 (TNV) the chain is on the extracellular side. Residues 206-226 (IFLGVPVLFISFSYVFIIATI) traverse the membrane as a helical segment. At 227–238 (LRIPSAEGRKKA) the chain is on the cytoplasmic side. Residues 239–259 (FSTCSAHLTVVVIFYGTILFM) traverse the membrane as a helical segment. Over 260–278 (YGKPKSKDPLGADKQDLAD) the chain is Extracellular. A helical membrane pass occupies residues 279–289 (KLISLFYGVVT). Topologically, residues 290–318 (PMLNPIIYSLRNKDVKAAVRDLIFQKCFA) are cytoplasmic.

The protein belongs to the G-protein coupled receptor 1 family.

The protein localises to the cell membrane. Functionally, odorant receptor. The polypeptide is Olfactory receptor 13C7 (Homo sapiens (Human)).